A 213-amino-acid chain; its full sequence is MDWKKEFIDFSFKKKVLKFGVFQLKSGRISPYFFNSGLLSTGIDIIKIGLFYARSIIDSKNKFDVLFGPAYKGIPIAVATSIALKNHYNLNVPYSFNRKEYKEHGEKGDLIGSTIYKKRVIILDDVITSGTAIHHSIKIIEKQEASISSIFVLLDRKEKGIRKLSTINHFRNQKSYKIISIITIDDLIEYVLEDKKLKEHIPQLIKYREKYGI.

Residue lysine 25 coordinates 5-phospho-alpha-D-ribose 1-diphosphate. Phenylalanine 33–phenylalanine 34 serves as a coordination point for orotate. Residues tyrosine 71 to lysine 72, arginine 98, lysine 99, lysine 102, histidine 104, and aspartate 124 to alanine 132 each bind 5-phospho-alpha-D-ribose 1-diphosphate. Orotate contacts are provided by threonine 128 and arginine 156.

The protein belongs to the purine/pyrimidine phosphoribosyltransferase family. PyrE subfamily. As to quaternary structure, homodimer. Mg(2+) is required as a cofactor.

The enzyme catalyses orotidine 5'-phosphate + diphosphate = orotate + 5-phospho-alpha-D-ribose 1-diphosphate. It functions in the pathway pyrimidine metabolism; UMP biosynthesis via de novo pathway; UMP from orotate: step 1/2. Its function is as follows. Catalyzes the transfer of a ribosyl phosphate group from 5-phosphoribose 1-diphosphate to orotate, leading to the formation of orotidine monophosphate (OMP). This Buchnera aphidicola subsp. Acyrthosiphon pisum (strain 5A) protein is Orotate phosphoribosyltransferase.